The chain runs to 298 residues: Ethylmalonyl-CoA decarboxylase (298 aa).

Belongs to the enoyl-CoA hydratase/isomerase family.

It is found in the cytoplasm. The protein localises to the cytosol. It catalyses the reaction (2S)-ethylmalonyl-CoA + H(+) = butanoyl-CoA + CO2. It carries out the reaction (S)-methylmalonyl-CoA + H(+) = propanoyl-CoA + CO2. The catalysed reaction is (2R)-ethylmalonyl-CoA + H(+) = butanoyl-CoA + CO2. In terms of biological role, decarboxylates ethylmalonyl-CoA, a potentially toxic metabolite, to form butyryl-CoA, suggesting it might be involved in metabolite proofreading. Acts preferentially on (S)-ethylmalonyl-CoA but also has some activity on the (R)-isomer. Also has methylmalonyl-CoA decarboxylase activity at lower level. The sequence is that of Ethylmalonyl-CoA decarboxylase (ECHDC1) from Gallus gallus (Chicken).